We begin with the raw amino-acid sequence, 115 residues long: Ribosomal protein uS4-like (115 aa).

This sequence belongs to the universal ribosomal protein uS4 family.

The sequence is that of Ribosomal protein uS4-like from Azoarcus sp. (strain BH72).